A 339-amino-acid polypeptide reads, in one-letter code: Serpentine receptor class alpha-20 (339 aa).

6 consecutive transmembrane segments (helical) span residues 30-50, 113-132, 151-171, 199-219, 249-269, and 284-304; these read VSFVFLATVILLSYYFAVLAI, LYFYYLTNYFSTYSVFSLTF, VSISLLIIQLVFTLGTYYFGL, FRTTIMVFCIIVTIFIYYLNV, CILIVLQFVCISVSSFGVNYI, and IAPFVVGVTYANLCLPLVIYF.

It belongs to the nematode receptor-like protein sra family.

It is found in the membrane. The chain is Serpentine receptor class alpha-20 (sra-20) from Caenorhabditis elegans.